A 603-amino-acid chain; its full sequence is Mono(2-hydroxyethyl) terephthalate hydrolase (603 aa).

An N-terminal signal peptide occupies residues 1 to 17 (MQTTVTTMLLASVALAA). Cys-18 carries the N-palmitoyl cysteine lipid modification. Cys-18 carries the S-diacylglycerol cysteine lipid modification. Residues 24–44 (TPLPLPQQQPPQQEPPPPPVP) form a disordered region. A compositionally biased stretch (pro residues) spans 26 to 44 (LPLPQQQPPQQEPPPPPVP). A disulfide bridge connects residues Cys-51 and Cys-92. Gly-132 is a 4-[(2-hydroxyethoxy)carbonyl]benzoate binding site. Intrachain disulfides connect Cys-224-Cys-529, Cys-303-Cys-320, Cys-340-Cys-348, and Cys-577-Cys-599. Catalysis depends on Ser-225, which acts as the Acyl-ester intermediate. Glu-226 is a binding site for 4-[(2-hydroxyethoxy)carbonyl]benzoate. Ca(2+) contacts are provided by Asp-304, Asp-307, Leu-309, Asp-311, and Ile-313. 4-[(2-hydroxyethoxy)carbonyl]benzoate is bound by residues Arg-411 and Ser-416. Active-site charge relay system residues include Asp-492 and His-528. His-528 is a binding site for 4-[(2-hydroxyethoxy)carbonyl]benzoate.

This sequence belongs to the tannase family.

The protein resides in the cell outer membrane. The enzyme catalyses 4-[(2-hydroxyethoxy)carbonyl]benzoate + H2O = terephthalate + ethylene glycol + H(+). Its function is as follows. Involved in the degradation and assimilation of the plastic poly(ethylene terephthalate) (PET), which allows I.sakaiensis to use PET as its major energy and carbon source for growth. Likely acts synergistically with PETase to depolymerize PET. Catalyzes the hydrolysis of mono(2-hydroxyethyl) terephthalate (MHET) into its two environmentally benign monomers, terephthalate and ethylene glycol. Does not show activity against PET, bis(hydroxyethyl) terephthalate (BHET), pNP-aliphatic esters or typical aromatic ester compounds catalyzed by the tannase family enzymes, such as ethyl gallate and ethyl ferulate. This chain is Mono(2-hydroxyethyl) terephthalate hydrolase, found in Piscinibacter sakaiensis (Ideonella sakaiensis).